We begin with the raw amino-acid sequence, 185 residues long: Ribosome-recycling factor (185 aa).

Belongs to the RRF family.

It localises to the cytoplasm. Functionally, responsible for the release of ribosomes from messenger RNA at the termination of protein biosynthesis. May increase the efficiency of translation by recycling ribosomes from one round of translation to another. The protein is Ribosome-recycling factor of Vibrio campbellii (strain ATCC BAA-1116).